A 121-amino-acid polypeptide reads, in one-letter code: Large ribosomal subunit protein bL12 (121 aa).

It belongs to the bacterial ribosomal protein bL12 family. Homodimer. Part of the ribosomal stalk of the 50S ribosomal subunit. Forms a multimeric L10(L12)X complex, where L10 forms an elongated spine to which 2 to 4 L12 dimers bind in a sequential fashion. Binds GTP-bound translation factors.

In terms of biological role, forms part of the ribosomal stalk which helps the ribosome interact with GTP-bound translation factors. Is thus essential for accurate translation. The sequence is that of Large ribosomal subunit protein bL12 from Tremblaya princeps.